Here is a 3010-residue protein sequence, read N- to C-terminus: Genome polyprotein (3010 aa).

Ser-2 is modified (N-acetylserine; by host). The interval 2–23 (STNPKPQRKTKRNTNRRPQDVK) is interaction with STAT1. An interaction with EIF2AK2/PKR region spans residues 2–58 (STNPKPQRKTKRNTNRRPQDVKFPGGGQIVGGVYLLPRRGPRLGVRATRKTSERSQP). Residues 2–59 (STNPKPQRKTKRNTNRRPQDVKFPGGGQIVGGVYLLPRRGPRLGVRATRKTSERSQPR) form an interaction with DDX3X region. The interval 2–75 (STNPKPQRKT…PKARQPEGRA (74 aa)) is disordered. Over 2-168 (STNPKPQRKT…EDGVNYATGN (167 aa)) the chain is Cytoplasmic. Short sequence motifs (nuclear localization signal) lie at residues 5 to 13 (PKPQRKTKR) and 38 to 43 (PRRGPR). Positions 7–16 (PQRKTKRNTN) are enriched in basic residues. Low complexity predominate over residues 32–47 (GGVYLLPRRGPRLGVR). Ser-53 is subject to Phosphoserine; by host. 2 consecutive short sequence motifs (nuclear localization signal) follow at residues 58–64 (PRGRRQP) and 66–71 (PKARQP). Ser-99 carries the post-translational modification Phosphoserine; by host. An important for endoplasmic reticulum and mitochondrial localization region spans residues 112 to 152 (PRRRSRNLGKVIDTLTCGFADLMGYIPLVGAPLGGAARALA). Ser-116 is modified (phosphoserine; by host PKA). Residues 122–173 (VIDTLTCGFADLMGYIPLVGAPLGGAARALAHGVRVLEDGVNYATGNLPGCS) form an interaction with APOA2 region. Positions 164 to 167 (YATG) are important for lipid droplets localization. A helical transmembrane segment spans residues 169–189 (LPGCSFSIFLLALLSCLTIPA). Residues 178–191 (LLALLSCLTIPASA) constitute a propeptide, ER anchor for the core protein, removed in mature form by host signal peptidase. Over 190-358 (SAYEVRNVSG…AGAHWGVLAG (169 aa)) the chain is Lumenal. Residues Asn-196, Asn-209, Asn-234, and Asn-250 are each glycosylated (N-linked (GlcNAc...) asparagine; by host). The tract at residues 265–296 (LVGAAALCSAMYVGDLCGSVFLVAQLFTFSPR) is important for fusion. Asn-305 is a glycosylation site (N-linked (GlcNAc...) asparagine; by host). A helical membrane pass occupies residues 359 to 379 (LAYYSMVGNWAKVLIVMLLFA). The Lumenal portion of the chain corresponds to 380-725 (GVDGGTYVTG…WEYVLLLFLL (346 aa)). Positions 385 to 411 (TYVTGGTMAKNTLGITSLFSPGSSQKI) are HVR1. A glycan (N-linked (GlcNAc...) asparagine; by host) is linked at Asn-417. 3 N-linked (GlcNAc...) (high mannose) asparagine; by host glycosylation sites follow: Asn-423, Asn-430, and Asn-448. 4 disulfides stabilise this stretch: Cys-429–Cys-552, Cys-452–Cys-459, Cys-486–Cys-494, and Cys-503–Cys-508. The tract at residues 474 to 482 (YNESHSSDQ) is HVR2. The tract at residues 480–493 (SDQRPYCWHYAPRP) is CD81-binding 1. Asn-532 is a glycosylation site (N-linked (GlcNAc...) (high mannose) asparagine; by host). The segment at 544–551 (PPQGNWFG) is CD81-binding 2. N-linked (GlcNAc...) (high mannose) asparagine; by host glycosylation is present at Asn-556. A disulfide bond links Cys-564 and Cys-569. Asn-576 carries N-linked (GlcNAc...) (high mannose) asparagine; by host glycosylation. Intrachain disulfides connect Cys-581-Cys-585, Cys-597-Cys-620, and Cys-607-Cys-644. N-linked (GlcNAc...) (high mannose) asparagine; by host glycans are attached at residues Asn-623 and Asn-645. Cys-652 and Cys-677 form a disulfide bridge. An EIF2AK2/eIF2-alpha phosphorylation homology domain (PePHD) region spans residues 660-671 (SELSPLLLSTTE). The chain crosses the membrane as a helical span at residues 726–746 (LADARVCACLWMMLLIAQAEA). At 747 to 757 (ALENLVVLNAA) the chain is on the lumenal side. Residues 758 to 778 (SVAGAHGILSFLVFFCAAWYI) traverse the membrane as a helical segment. The Cytoplasmic portion of the chain corresponds to 779-781 (KGR). The chain crosses the membrane as a helical span at residues 782–803 (LVPGAAYALYGVWPLLLLLLAL). Topologically, residues 804-813 (PPRAYAMDRE) are lumenal. A helical transmembrane segment spans residues 814–834 (MAASCGGAVFVGLILLTLSPH). At 835–838 (YKLF) the chain is on the cytoplasmic side. A helical membrane pass occupies residues 839–859 (LARLIWWLQYFITRAEAHLQV). Over 860-881 (WIPPLNVRGGRDAVILLTCAIH) the chain is Lumenal. Residues 882-902 (PELIFTITKILLAILGPLMVL) form a helical membrane-spanning segment. The Peptidase C18 domain occupies 903-1026 (QAGITKVPYF…SLEGQGWRLL (124 aa)). Topologically, residues 903-1657 (QAGITKVPYF…CMSADLEVVT (755 aa)) are cytoplasmic. The protease NS2-3 stretch occupies residues 904–1206 (AGITKVPYFV…PVESMETTMR (303 aa)). The S-palmitoyl cysteine; by host moiety is linked to residue Cys-922. The interval 929–949 (AGGHYVQMALMKLAALTGTYV) is interaction with host SCPS1. Residues His-952, Glu-972, and Cys-993 each act as for protease NS2 activity; shared with dimeric partner in the active site. The Peptidase S29 domain maps to 1027–1208 (APITAYSQQT…ESMETTMRSP (182 aa)). Catalysis depends on charge relay system; for serine protease NS3 activity residues His-1083 and Asp-1107. The Zn(2+) site is built by Cys-1123 and Cys-1125. Ser-1165 serves as the catalytic Charge relay system; for serine protease NS3 activity. Cys-1171 and His-1175 together coordinate Zn(2+). The region spanning 1217-1369 (PAVPQTFQVA…PNIEEVALSS (153 aa)) is the Helicase ATP-binding domain. 1230–1237 (APTGSGKS) provides a ligand contact to ATP. Mg(2+)-binding residues include Ser-1237 and Glu-1317. The DECH box motif lies at 1316 to 1319 (DECH). An RNA-binding region spans residues 1486-1497 (QRRGRTGRGRMG). The chain crosses the membrane as a helical span at residues 1658-1678 (STWVLVGGVLAALAAYCLTTG). Residues 1679–1690 (SVVIVGRIILSG) form an NS3-binding region. Topologically, residues 1679–1805 (SVVIVGRIIL…SITSPLTTQH (127 aa)) are cytoplasmic. The helical transmembrane segment at 1806 to 1826 (TLLFNILGGWVAAQLAPPSAA) threads the bilayer. Topologically, residues 1827–1828 (SA) are lumenal. The chain crosses the membrane as a helical span at residues 1829–1849 (FVGAGIAGAAVGSIGLGKVLV). The interval 1833–1861 (GIAGAAVGSIGLGKVLVDILAGYGAGVAG) is glycine zipper. Residue Asp-1850 is a topological domain, cytoplasmic. A helical transmembrane segment spans residues 1851–1871 (ILAGYGAGVAGALVAFKVMSG). The Lumenal portion of the chain corresponds to 1872 to 1881 (EMPSTEDLVN). The helical transmembrane segment at 1882–1902 (LLPAILSPGALVVGVVCAAIL) threads the bilayer. Over 1903–1972 (RRHVGPGEGA…WINEDCSTPC (70 aa)) the chain is Cytoplasmic. 2 S-palmitoyl cysteine; by host lipidation sites follow: Cys-1968 and Cys-1972. The stretch at 1973-2003 (SGSWLRDVWDWICTVLTDFKTWLQSKLLPRL) is an intramembrane region. A membrane-binding region spans residues 1978–1998 (RDVWDWICTVLTDFKTWLQSK). The Cytoplasmic portion of the chain corresponds to 2004 to 2989 (PGVPFFSCQR…YHSLSRARPR (986 aa)). Positions 2005-2221 (GVPFFSCQRG…KATCTTRHDS (217 aa)) are RNA-binding. Positions 2011, 2029, 2031, and 2052 each coordinate Zn(2+). The segment at 2120–2208 (EFFTEVDGVR…ASSSASQLSA (89 aa)) is FKBP8-binding. Residues 2120–2332 (EFFTEVDGVR…PIPPPRRKRT (213 aa)) form a transcriptional activation region. The interaction with non-structural protein 4A stretch occupies residues 2135 to 2139 (PACKP). Residues 2187–2219 (KRRLARGSPPSLASSSASQLSAPSLKATCTTRH) are disordered. Residues 2189-2441 (RLARGSPPSL…PCAAEETKLP (253 aa)) are interaction with host SKP2. Phosphoserine; by host; in p56 is present on Ser-2194. Residues 2194–2211 (SPPSLASSSASQLSAPSL) are compositionally biased toward low complexity. Position 2197 is a phosphoserine; by host; in p58 (Ser-2197). At Ser-2201 the chain carries Phosphoserine; by host; in p56 and p58, regulates intracellular NS5A distribution. Residues Ser-2204, Ser-2207, and Ser-2210 each carry the phosphoserine; by host; in p58 modification. 2 ISDR regions span residues 2206–2245 (LSAPSLKATCTTRHDSPDADLIEANLLWRQEMGGNITRVE) and 2210–2249 (SLKATCTTRHDSPDADLIEANLLWRQEMGGNITRVESENK). The interval 2210-2275 (SLKATCTTRH…REVSVPAEIL (66 aa)) is EIF2AK2/PKR-binding. Residues 2249 to 2306 (KVVILDSFEPLQAEEDEREVSVPAEILRRSRKFPRAMPIWARPDYNPPLLESWKDPDY) form an NS4B-binding region. An SH3-binding motif is present at residues 2322-2325 (PPIP). The Nuclear localization signal motif lies at 2326-2334 (PPRRKRTVV). The segment at 2332 to 2441 (TVVLSESTVS…PCAAEETKLP (110 aa)) is interaction with host IFI27. Lys-2350 participates in a covalent cross-link: Glycyl lysine isopeptide (Lys-Gly) (interchain with G-Cter in ubiquitin). Polar residues predominate over residues 2351 to 2371 (TFGSSESSAVDSGTATASPDQ). The interval 2351–2407 (TFGSSESSAVDSGTATASPDQPSDDGDAGSDVESYSSMPPLEGEPGDPDLSDGSWST) is disordered. Residues 2354 to 2377 (SSESSAVDSGTATASPDQPSDDGD) are V3. 2 positions are modified to phosphoserine; by host: Ser-2448 and Ser-2461. The RdRp catalytic domain maps to 2633–2751 (PMGFAYDTRC…ICESAGTQED (119 aa)). Mg(2+) contacts are provided by Asp-2639, Asp-2737, and Asp-2738. Residues 2990–3010 (WFMWCLLLLSVGVGIYLLPNR) form a helical membrane-spanning segment.

This sequence belongs to the hepacivirus polyprotein family. As to quaternary structure, homooligomer. Interacts with E1 (via C-terminus). Interacts with the non-structural protein 5A. Interacts (via N-terminus) with host STAT1 (via SH2 domain); this interaction results in decreased STAT1 phosphorylation and ubiquitin-mediated proteasome-dependent STAT1 degradation, leading to decreased IFN-stimulated gene transcription. Interacts with host STAT3; this interaction constitutively activates STAT3. Interacts with host LTBR receptor. Interacts with host TNFRSF1A receptor and possibly induces apoptosis. Interacts with host HNRPK. Interacts with host YWHAE. Interacts with host UBE3A/E6AP. Interacts with host DDX3X. Interacts with host APOA2. Interacts with host RXRA protein. Interacts with host SP110 isoform 3/Sp110b; this interaction sequesters the transcriptional corepressor SP110 away from the nucleus. Interacts with host CREB3 nuclear transcription protein; this interaction triggers cell transformation. Interacts with host ACY3. Interacts with host C1QR1. Interacts with host RBM24; this interaction, which enhances the interaction of the mature core protein with 5'-UTR, may inhibit viral translation and favor replication. Interacts with host EIF2AK2/PKR; this interaction induces the autophosphorylation of EIF2AK2. Part of the viral assembly initiation complex composed of NS2, E1, E2, NS3, NS4A, NS5A and the mature core protein. In terms of assembly, forms a heterodimer with envelope glycoprotein E2. Interacts with mature core protein. Interacts with protease NS2. The heterodimer E1/E2 interacts with host CLDN1; this interaction plays a role in viral entry into host cell. Interacts with host SPSB2 (via C-terminus). Part of the viral assembly initiation complex composed of NS2, E1, E2, NS3, NS4A, NS5A and the mature core protein. Interacts with human PLSCR1. Interacts with host NEURL3; this interaction prevents E1 binding to glycoprotein E2. Forms a heterodimer with envelope glycoprotein E1. Interacts with host CD81 and SCARB1 receptors; these interactions play a role in viral entry into host cell. Interacts with host EIF2AK2/PKR; this interaction inhibits EIF2AK2 and probably allows the virus to evade the innate immune response. Interacts with host CD209/DC-SIGN and CLEC4M/DC-SIGNR. Interact with host SPCS1; this interaction is essential for viral particle assembly. Interacts with protease NS2. The heterodimer E1/E2 interacts with host CLDN1; this interaction plays a role in viral entry into host cell. Part of the viral assembly initiation complex composed of NS2, E1, E2, NS3, NS4A, NS5A and the mature core protein. Interacts with host SLC3A2/4F2hc; the interaction may facilitate viral entry into host cell. Interacts with human PLSCR1. As to quaternary structure, homohexamer. Homoheptamer. Interacts with protease NS2. In terms of assembly, homodimer. Interacts with host SPCS1; this interaction is essential for viral particle assembly. Interacts with envelope glycoprotein E1. Interacts with envelope glycoprotein E2. Interacts with viroporin p7. Interacts with serine protease/helicase NS3. Part of the replication complex composed of NS2, NS3, NS4A, NS4B, NS5A and the RNA-directed RNA polymerase embedded in an ER-derived membranous web. Part of the viral assembly initiation complex composed of NS2, E1, E2, NS3, NS4A, NS5A and the mature core protein. Interacts with protease NS2. Interacts with non-structural protein 4A; this interaction stabilizes the folding of NS3 serine protease. NS3-NS4A interaction is essential for NS3 activation and allows membrane anchorage of the latter. NS3/NS4A complex also prevents phosphorylation of host IRF3, thus preventing the establishment of dsRNA induced antiviral state. Interacts with host MAVS; this interaction leads to the cleavage and inhibition of host MAVS. Interacts with host TICAM1; this interaction leads to the cleavage and inhibition of host TICAM1. Interacts with host TANK-binding kinase/TBK1; this interaction results in the inhibition of the association between TBK1 and IRF3, which leads to the inhibition of IRF3 activation. Interacts with host RBM24. Part of the replication complex composed of NS2, NS3, NS4A, NS4B, NS5A and the RNA-directed RNA polymerase embedded in an ER-derived membranous web. Part of the viral assembly initiation complex composed of NS2, E1, E2, NS3, NS4A, NS5A and the mature core protein. As to quaternary structure, monomer. Homodimer; dimerization is required for RNA-binding. Interacts with the mature core protein. Interacts with host GRB2. Interacts with host BIN1. Interacts with host PIK3R1. Interacts with host SRCAP. Interacts with host FKBP8. Interacts with host VAPB. Interacts with host EIF2AK2/PKR; this interaction leads to disruption of EIF2AK2 dimerization by NS5A and probably allows the virus to evade the innate immune response. Interacts (via N-terminus) with host PACSIN2 (via N-terminus); this interaction attenuates protein kinase C alpha-mediated phosphorylation of PACSIN2 by disrupting the interaction between PACSIN2 and PRKCA. Interacts (via N-terminus) with host SRC kinase (via SH2 domain). Interacts with most Src-family kinases. Interacts with host IFI27 and SKP2; promotes the ubiquitin-mediated proteasomal degradation of NS5A. Interacts (via N-terminus) with non-structural protein 4A. Interacts with non-structural protein 4B. Interacts with RNA-directed RNA polymerase. Part of the replication complex composed of NS2, NS3, NS4A, NS4B, NS5A and the RNA-directed RNA polymerase embedded in an ER-derived membranous web. Interacts with host GPS2. Interacts with host TNFRSF21; this interaction allows the modulation by the virus of JNK, p38 MAPK, STAT3, and Akt signaling pathways in a DR6-dependent manner. Interacts (via N-terminus) with host CIDEB (via N-terminus); this interaction seems to regulate the association of HCV particles with APOE. Interacts with host CHKA/Choline Kinase-alpha; CHKA bridges host PI4KA and NS5A and potentiates NS5A-stimulated PI4KA activity, which then facilitates the targeting of the ternary complex to the ER for viral replication. Interacts with host SPSB2 (via C-terminus); this interaction targets NS5A for ubiquitination and degradation. Part of the viral assembly initiation complex composed of NS2, E1, E2, NS3, NS4A, NS5A and the mature core protein. Zn(2+) serves as cofactor. Requires Mg(2+) as cofactor. Specific enzymatic cleavages in vivo yield mature proteins. The structural proteins, core, E1, E2 and p7 are produced by proteolytic processing by host signal peptidases. The core protein precursor is synthesized as a 23 kDa, which is retained in the ER membrane through the hydrophobic signal peptide. Cleavage by the signal peptidase releases the 21 kDa mature core protein. The cleavage of the core protein precursor occurs between aminoacids 176 and 188 but the exact cleavage site is not known. Some degraded forms of the core protein appear as well during the course of infection. The other proteins (p7, NS2, NS3, NS4A, NS4B, NS5A and NS5B) are cleaved by the viral proteases. Autoprocessing between NS2 and NS3 is mediated by the NS2 cysteine protease catalytic domain and regulated by the NS3 N-terminal domain. In terms of processing, phosphorylated by host PKC and PKA. Post-translationally, ubiquitinated; mediated by UBE3A and leading to core protein subsequent proteasomal degradation. Highly N-glycosylated. In terms of processing, palmitoylation is required for NS2/3 autoprocessing and E2 recruitment to membranes. Post-translationally, palmitoylated. This modification may play a role in its polymerization or in protein-protein interactions. Cleaved by host caspases which are probably activated by the viral infection. In terms of processing, ubiquitinated. Ubiquitination, most probably at Lys-2350, mediated by host IFI27 and SKP2 leads to proteasomal degradation, restricting viral infection. Ubiquitination by host TRIM22 leads to interruption of viral replication. Post-translationally, phosphorylated on serines in a basal form termed p56. p58 is a hyperphosphorylated form of p56. p56 and p58 coexist in the cell in roughly equivalent amounts. Hyperphosphorylation is dependent on the presence of NS4A. Host CSNK1A1/CKI-alpha or RPS6KB1 kinases may be responsible for NS5A phosphorylation. Tyrosine phosphorylation is essential for the interaction with host SRC. In terms of processing, the N-terminus is phosphorylated by host PRK2/PKN2.

It is found in the host endoplasmic reticulum membrane. Its subcellular location is the host mitochondrion membrane. It localises to the virion. The protein localises to the host cytoplasm. The protein resides in the host nucleus. It is found in the host lipid droplet. Its subcellular location is the virion membrane. It localises to the host mitochondrion. The protein localises to the host cell membrane. The protein resides in the host perinuclear region. The enzyme catalyses Hydrolysis of four peptide bonds in the viral precursor polyprotein, commonly with Asp or Glu in the P6 position, Cys or Thr in P1 and Ser or Ala in P1'.. It carries out the reaction a ribonucleoside 5'-triphosphate + H2O = a ribonucleoside 5'-diphosphate + phosphate + H(+). It catalyses the reaction ATP + H2O = ADP + phosphate + H(+). The catalysed reaction is RNA(n) + a ribonucleoside 5'-triphosphate = RNA(n+1) + diphosphate. Inhibited by the antiviral drug hexamethylene amiloride. Inhibition by amantadine appears to be genotype-dependent. Also inhibited by long-alkyl-chain iminosugar derivatives. Its activity is regulated as follows. Activity is up-regulated by PRK2/PKN2-mediated phosphorylation. Its function is as follows. Packages viral RNA to form a viral nucleocapsid, and promotes virion budding. Participates in the viral particle production as a result of its interaction with the non-structural protein 5A. Binds RNA and may function as a RNA chaperone to induce the RNA structural rearrangements taking place during virus replication. Modulates viral translation initiation by interacting with viral IRES and 40S ribosomal subunit. Affects various cell signaling pathways, host immunity and lipid metabolism. Prevents the establishment of cellular antiviral state by blocking the interferon-alpha/beta (IFN-alpha/beta) and IFN-gamma signaling pathways and by blocking the formation of phosphorylated STAT1 and promoting ubiquitin-mediated proteasome-dependent degradation of STAT1. Activates STAT3 leading to cellular transformation. Regulates the activity of cellular genes, including c-myc and c-fos. May repress the promoter of p53, and sequester CREB3 and SP110 isoform 3/Sp110b in the cytoplasm. Represses cell cycle negative regulating factor CDKN1A, thereby interrupting an important check point of normal cell cycle regulation. Targets transcription factors involved in the regulation of inflammatory responses and in the immune response: suppresses NF-kappa-B activation, and activates AP-1. Binds to dendritic cells (DCs) via C1QR1, resulting in down-regulation of T-lymphocytes proliferation. Alters lipid metabolism by interacting with hepatocellular proteins involved in lipid accumulation and storage. Induces up-regulation of FAS promoter activity, and thereby contributes to the increased triglyceride accumulation in hepatocytes (steatosis). Forms a heterodimer with envelope glycoprotein E2, which mediates virus attachment to the host cell, virion internalization through clathrin-dependent endocytosis and fusion with host membrane. Fusion with the host cell is most likely mediated by both E1 and E2, through conformational rearrangements of the heterodimer required for fusion rather than a classical class II fusion mechanism. E1/E2 heterodimer binds host apolipoproteins such as APOB and APOE thereby forming a lipo-viro-particle (LVP). APOE associated to the LVP allows the initial virus attachment to cell surface receptors such as the heparan sulfate proteoglycans (HSPGs), syndecan-1 (SDC1), syndecan-1 (SDC2), the low-density lipoprotein receptor (LDLR) and scavenger receptor class B type I (SCARB1). The cholesterol transfer activity of SCARB1 allows E2 exposure and binding of E2 to SCARB1 and the tetraspanin CD81. E1/E2 heterodimer binding on CD81 activates the epithelial growth factor receptor (EGFR) signaling pathway. Diffusion of the complex E1-E2-EGFR-SCARB1-CD81 to the cell lateral membrane allows further interaction with Claudin 1 (CLDN1) and occludin (OCLN) to finally trigger HCV entry. In terms of biological role, forms a heterodimer with envelope glycoprotein E1, which mediates virus attachment to the host cell, virion internalization through clathrin-dependent endocytosis and fusion with host membrane. Fusion with the host cell is most likely mediated by both E1 and E2, through conformational rearrangements of the heterodimer required for fusion rather than a classical class II fusion mechanism. The interaction between envelope glycoprotein E2 and host apolipoprotein E/APOE allows the proper assembly, maturation and infectivity of the viral particles. This interaction is probably promoted via the up-regulation of cellular autophagy by the virus. E1/E2 heterodimer binds host apolipoproteins such as APOB and APOE thereby forming a lipo-viro-particle (LVP). APOE associated to the LVP allows the initial virus attachment to cell surface receptors such as the heparan sulfate proteoglycans (HSPGs), syndecan-1 (SDC1), syndecan-1 (SDC2), the low-density lipoprotein receptor (LDLR) and scavenger receptor class B type I (SCARB1). The cholesterol transfer activity of SCARB1 allows E2 exposure and binding of E2 to SCARB1 and the tetraspanin CD81. E1/E2 heterodimer binding on CD81 activates the epithelial growth factor receptor (EGFR) signaling pathway. Diffusion of the complex E1-E2-EGFR-SCARB1-CD81 to the cell lateral membrane allows further interaction with Claudin 1 (CLDN1) and occludin (OCLN) to finally trigger HCV entry. Inhibits host EIF2AK2/PKR activation, preventing the establishment of an antiviral state. Viral ligand for CD209/DC-SIGN and CLEC4M/DC-SIGNR, which are respectively found on dendritic cells (DCs), and on liver sinusoidal endothelial cells and macrophage-like cells of lymph node sinuses. These interactions allow the capture of circulating HCV particles by these cells and subsequent facilitated transmission to permissive cells such as hepatocytes and lymphocyte subpopulations. The interaction between E2 and host amino acid transporter complex formed by SLC3A2 and SLC7A5/LAT1 may facilitate viral entry into host cell. Functionally, ion channel protein that acts as a viroporin and plays an essential role in the assembly, envelopment and secretion of viral particles. Regulates the host cell secretory pathway, which induces the intracellular retention of viral glycoproteins and favors assembly of viral particles. Creates a pore in acidic organelles and releases Ca(2+) and H(+) in the cytoplasm of infected cells, leading to a productive viral infection. High levels of cytoplasmic Ca(2+) may trigger membrane trafficking and transport of viral ER-associated proteins to viroplasms, sites of viral genome replication. This ionic imbalance induces the assembly of the inflammasome complex, which triggers the maturation of pro-IL-1beta into IL-1beta through the action of caspase-1. Targets also host mitochondria and induces mitochondrial depolarization. In addition of its role as a viroporin, acts as a lipid raft adhesion factor. Its function is as follows. Cysteine protease required for the proteolytic auto-cleavage between the non-structural proteins NS2 and NS3. The N-terminus of NS3 is required for the function of NS2 protease (active region NS2-3). Promotes the initiation of viral particle assembly by mediating the interaction between structural and non-structural proteins. Displays three enzymatic activities: serine protease with a chymotrypsin-like fold, NTPase and RNA helicase. NS3 serine protease, in association with NS4A, is responsible for the cleavages of NS3-NS4A, NS4A-NS4B, NS4B-NS5A and NS5A-NS5B. The NS3/NS4A complex prevents phosphorylation of host IRF3, thus preventing the establishment of dsRNA induced antiviral state. The NS3/NS4A complex induces host amino acid transporter component SLC3A2, thus contributing to HCV propagation. NS3 RNA helicase binds to RNA and unwinds both dsDNA and dsRNA in the 3' to 5' direction, and likely resolves RNA complicated stable secondary structures in the template strand. Binds a single ATP and catalyzes the unzipping of a single base pair of dsRNA. Inhibits host antiviral proteins TBK1 and IRF3 thereby preventing the establishment of an antiviral state. Cleaves host MAVS/CARDIF thereby preventing the establishment of an antiviral state. Cleaves host TICAM1/TRIF, thereby disrupting TLR3 signaling and preventing the establishment of an antiviral state. In terms of biological role, peptide cofactor which forms a non-covalent complex with the N-terminal of NS3 serine protease. The NS3/NS4A complex prevents phosphorylation of host IRF3, thus preventing the establishment of dsRNA induced antiviral state. The NS3/NS4A complex induces host amino acid transporter component SLC3A2, thus contributing to HCV propagation. Functionally, induces a specific membrane alteration that serves as a scaffold for the virus replication complex. This membrane alteration gives rise to the so-called ER-derived membranous web that contains the replication complex. NS4B self-interaction contributes to its function in membranous web formation. Promotes host TRIF protein degradation in a CASP8-dependent manner thereby inhibiting host TLR3-mediated interferon signaling. Disrupts the interaction between STING and TBK1 contributing to the inhibition of interferon signaling. Its function is as follows. Phosphorylated protein that is indispensable for viral replication and assembly. Both hypo- and hyperphosphorylated states are required for the viral life cycle. The hyperphosphorylated form of NS5A is an inhibitor of viral replication. Involved in RNA-binding and especially in binding to the viral genome. Zinc is essential for RNA-binding. Participates in the viral particle production as a result of its interaction with the viral mature core protein. Its interaction with host VAPB may target the viral replication complex to vesicles. Down-regulates viral IRES translation initiation. Mediates interferon resistance, presumably by interacting with and inhibiting host EIF2AK2/PKR. Prevents BIN1-induced apoptosis. Acts as a transcriptional activator of some host genes important for viral replication when localized in the nucleus. Via the interaction with host PACSIN2, modulates lipid droplet formation in order to promote virion assembly. Modulates TNFRSF21/DR6 signaling pathway for viral propagation. RNA-dependent RNA polymerase that performs primer-template recognition and RNA synthesis during viral replication. Initiates RNA transcription/replication at a flavin adenine dinucleotide (FAD), resulting in a 5'- FAD cap on viral RNAs. In this way, recognition of viral 5' RNA by host pattern recognition receptors can be bypassed, thereby evading activation of antiviral pathways. This is Genome polyprotein from Hepatitis C virus genotype 1b (isolate Con1) (HCV).